Here is a 299-residue protein sequence, read N- to C-terminus: Protease HtpX homolog (299 aa).

Transmembrane regions (helical) follow at residues 5 to 25 and 44 to 64; these read IFLF…VLSV and MVAL…MSLA. His155 is a binding site for Zn(2+). The active site involves Glu156. His159 is a binding site for Zn(2+). Helical transmembrane passes span 170-190 and 205-225; these read LLQG…AWIA and FIAV…VVFA. Glu231 serves as a coordination point for Zn(2+).

The protein belongs to the peptidase M48B family. It depends on Zn(2+) as a cofactor.

The protein localises to the cell membrane. The chain is Protease HtpX homolog from Bacillus pumilus (strain SAFR-032).